We begin with the raw amino-acid sequence, 196 residues long: uncharacterized protein (196 aa).

Residues 44-46 (TTA), G80, V100, and 107-109 (PSL) contribute to the S-adenosyl-L-methionine site.

It belongs to the class IV-like SAM-binding methyltransferase superfamily. RNA methyltransferase TrmH family.

This is an uncharacterized protein from Serratia marcescens.